Consider the following 581-residue polypeptide: Jasmonoyl--L-amino acid synthetase GH3.5 (581 aa).

Serine 92 contributes to the ATP binding site. Serine 95 provides a ligand contact to jasmonate. ATP is bound by residues threonine 115, asparagine 161, and 324–329; that span reads GASEGW. 159–163 is a binding site for an L-alpha-amino acid; sequence TTNLY. Residues 321-324 and serine 326 each bind jasmonate; that span reads ADYG. Residue 534–538 coordinates an L-alpha-amino acid; the sequence is EILDH. Lysine 561 provides a ligand contact to ATP.

The protein belongs to the IAA-amido conjugating enzyme family. In terms of tissue distribution, expressed in green shoots, roots and flowers.

It carries out the reaction a jasmonate + an L-alpha-amino acid + ATP = a jasmonyl-L-amino acid + AMP + diphosphate + H(+). Catalyzes the synthesis of jasmonate-amino acid conjugates by adenylation. Catalyzes the conjugation of jasmonate (JA) to Ile when expressed in a heterologous system (E.coli). Catalyzes in vitro the conjugation of jasmonate (JA) to Ile, Phe, Cys, Leu, Met, Ala, Val and Trp. Involved in the production of JA-Ile in response to infection by the rice blast fungus Magnaporthe oryzae. Required for the accumulation of the flavonoid phytoalexin sakuranetin in response to infection by the rice blast fungus. Involved in herbivory-induced JA-Ile accumulation. Involved in the production of JA-Ile in response to wounding. Required for modulation of light and JA signaling in photomorphogenesis. Required for normal seed development. Required for optimal flower opening and closing and anther dehiscence. May catalyze the synthesis of indole-3-acetic acid (IAA)-amino acid conjugates, providing a mechanism for the plant to cope with the presence of excess auxin. The chain is Jasmonoyl--L-amino acid synthetase GH3.5 from Oryza sativa subsp. japonica (Rice).